A 422-amino-acid polypeptide reads, in one-letter code: Serine--tRNA ligase (422 aa).

231-233 (TGE) provides a ligand contact to L-serine. 262 to 264 (RQE) contributes to the ATP binding site. An L-serine-binding site is contributed by E285. Residue 349-352 (EISS) participates in ATP binding. S384 lines the L-serine pocket.

It belongs to the class-II aminoacyl-tRNA synthetase family. Type-1 seryl-tRNA synthetase subfamily. Homodimer. The tRNA molecule binds across the dimer.

The protein resides in the cytoplasm. It carries out the reaction tRNA(Ser) + L-serine + ATP = L-seryl-tRNA(Ser) + AMP + diphosphate + H(+). The enzyme catalyses tRNA(Sec) + L-serine + ATP = L-seryl-tRNA(Sec) + AMP + diphosphate + H(+). Its pathway is aminoacyl-tRNA biosynthesis; selenocysteinyl-tRNA(Sec) biosynthesis; L-seryl-tRNA(Sec) from L-serine and tRNA(Sec): step 1/1. Catalyzes the attachment of serine to tRNA(Ser). Is also able to aminoacylate tRNA(Sec) with serine, to form the misacylated tRNA L-seryl-tRNA(Sec), which will be further converted into selenocysteinyl-tRNA(Sec). The protein is Serine--tRNA ligase of Mesoplasma florum (strain ATCC 33453 / NBRC 100688 / NCTC 11704 / L1) (Acholeplasma florum).